The following is a 394-amino-acid chain: Guanine nucleotide-binding protein G(s) subunit alpha (394 aa).

Residues 1 to 25 are disordered; the sequence is MGCLGDSKTEDQRNEEKAQREANKK. Residue glycine 2 is the site of N-palmitoyl glycine attachment. The S-palmitoyl cysteine moiety is linked to residue cysteine 3. Residues 7–25 are compositionally biased toward basic and acidic residues; sequence SKTEDQRNEEKAQREANKK. The G-alpha domain occupies 39–394; sequence ATHRLLLLGA…RMHLRQYELL (356 aa). The interval 42 to 55 is G1 motif; it reads RLLLLGAGESGKST. Residue 47 to 55 participates in GTP binding; sequence GAGESGKST. Serine 54 serves as a coordination point for Mg(2+). Residues 68–90 form a disordered region; that stretch reads FNGEGGEEDPQAARSNSDGEKAT. Residues 196–204 form a G2 motif region; the sequence is DLLRCRVLT. GTP is bound by residues 197–204, 223–227, 292–295, and alanine 366; these read LLRCRVLT, DVGGQ, and NKQD. Threonine 204 contributes to the Mg(2+) binding site. Residues 219-228 form a G3 motif region; sequence FHMFDVGGQR. Residues 288 to 295 are G4 motif; it reads ILFLNKQD. The tract at residues 364 to 369 is G5 motif; that stretch reads TCAVDT.

The protein belongs to the G-alpha family. G(s) subfamily. As to quaternary structure, heterotrimeric G proteins are composed of 3 units; alpha, beta and gamma. The alpha chain contains the guanine nucleotide binding site. Interacts with CRY1; the interaction may block GPCR-mediated regulation of cAMP concentrations. Interacts with ADCY6 and stimulates its adenylyl cyclase activity. Interacts with ADCY2 and ADCY5. Stimulates the ADCY5 adenylyl cyclase activity. Interaction with SASH1.

It is found in the cell membrane. Its function is as follows. Guanine nucleotide-binding proteins (G proteins) function as transducers in numerous signaling pathways controlled by G protein-coupled receptors (GPCRs). Signaling involves the activation of adenylyl cyclases, resulting in increased levels of the signaling molecule cAMP. GNAS functions downstream of several GPCRs, including beta-adrenergic receptors. Stimulates the Ras signaling pathway via RAPGEF2. This chain is Guanine nucleotide-binding protein G(s) subunit alpha (GNAS), found in Cricetulus longicaudatus (Long-tailed dwarf hamster).